The sequence spans 151 residues: Large ribosomal subunit protein uL13 (151 aa).

Belongs to the universal ribosomal protein uL13 family. Part of the 50S ribosomal subunit.

In terms of biological role, this protein is one of the early assembly proteins of the 50S ribosomal subunit, although it is not seen to bind rRNA by itself. It is important during the early stages of 50S assembly. This Picosynechococcus sp. (strain ATCC 27264 / PCC 7002 / PR-6) (Agmenellum quadruplicatum) protein is Large ribosomal subunit protein uL13.